The primary structure comprises 581 residues: Adenine deaminase (581 aa).

This sequence belongs to the metallo-dependent hydrolases superfamily. Adenine deaminase family. Requires Mn(2+) as cofactor.

It catalyses the reaction adenine + H2O + H(+) = hypoxanthine + NH4(+). This is Adenine deaminase from Brucella suis biovar 1 (strain 1330).